Consider the following 384-residue polypeptide: Protein cutoff (384 aa).

This sequence belongs to the DXO/Dom3Z family. As to quaternary structure, component of the Rhino-Deadlock-Cutoff (RDC) complex, composed of rhi/rhino, del/deadlock and cuff/cutoff. Interacts with rhi/rhino; this interaction is indirect and is mediated by del/deadlock. Interacts with del/deadlock (via C-terminal); this interaction is direct. Interacts with Rat1.

It localises to the cytoplasm. Its subcellular location is the nucleus. The protein resides in the chromosome. Involved in the piRNA pathway in germline tissues. Part of the Rhino-Deadlock-Cutoff (RDC) complex that stimulates piRNA biogenesis from chromatin regions corresponding to dual-strand, but not single-stranded, piRNA clusters. Promotes transcription of long piRNA precursors by preventing termination at canonical poly(A) sites. As part of the RDC complex, is recruited to chromatin enriched in histone modification H3K9me3 and might contribute to complex interaction by binding nascent transcript nucleic acid chains. Associates with chromatin upon exposure to homologous piRNA. Suppresses cleavage at canonical poly(A) sites by blocking recruitment of the cleavage and polyadenylation specificity factor (CPSF) complex and prevents transcriptional termination by RNA polymerase II, facilitating transcriptional read-through. As part of the RDC complex, involved in suppression of splicing. Catalytically inactive, lacking 5'-3' exonuclease and pyrophosphohydrolase activities. Stabilizes uncapped piRNA precursors in the nucleus, probably by sequestering or blocking the exonuclease activity of Rat1. May also be involved in siRNA biogenesis from dual-strand piRNA clusters. The polypeptide is Protein cutoff (cuff) (Drosophila melanogaster (Fruit fly)).